The sequence spans 192 residues: Elongation factor P (192 aa).

This sequence belongs to the elongation factor P family.

The protein localises to the cytoplasm. Its pathway is protein biosynthesis; polypeptide chain elongation. Functionally, involved in peptide bond synthesis. Stimulates efficient translation and peptide-bond synthesis on native or reconstituted 70S ribosomes in vitro. Probably functions indirectly by altering the affinity of the ribosome for aminoacyl-tRNA, thus increasing their reactivity as acceptors for peptidyl transferase. The protein is Elongation factor P (efp) of Aquifex aeolicus (strain VF5).